Reading from the N-terminus, the 94-residue chain is Phosphoribosyl-ATP pyrophosphatase (94 aa).

Belongs to the PRA-PH family.

Its subcellular location is the cytoplasm. The catalysed reaction is 1-(5-phospho-beta-D-ribosyl)-ATP + H2O = 1-(5-phospho-beta-D-ribosyl)-5'-AMP + diphosphate + H(+). It participates in amino-acid biosynthesis; L-histidine biosynthesis; L-histidine from 5-phospho-alpha-D-ribose 1-diphosphate: step 2/9. This Sulfurisphaera tokodaii (strain DSM 16993 / JCM 10545 / NBRC 100140 / 7) (Sulfolobus tokodaii) protein is Phosphoribosyl-ATP pyrophosphatase (hisE).